Reading from the N-terminus, the 776-residue chain is Structure-specific endonuclease subunit SLX4 (776 aa).

Acidic residues predominate over residues 201–217 (EEQMVSDDNSSTEDDTD). Disordered regions lie at residues 201–223 (EEQM…QNDG), 263–283 (KSLQ…PDQN), and 507–531 (PPLD…KPHS).

Belongs to the SLX4 family. Forms a heterodimer with SLX1. In terms of processing, phosphorylated in response to DNA damage.

Its subcellular location is the nucleus. In terms of biological role, regulatory subunit of the SLX1-SLX4 structure-specific endonuclease that resolves DNA secondary structures generated during DNA repair and recombination. Has endonuclease activity towards branched DNA substrates, introducing single-strand cuts in duplex DNA close to junctions with ss-DNA. This chain is Structure-specific endonuclease subunit SLX4, found in Candida albicans (strain SC5314 / ATCC MYA-2876) (Yeast).